A 344-amino-acid polypeptide reads, in one-letter code: UDP-3-O-acylglucosamine N-acyltransferase (344 aa).

H244 (proton acceptor) is an active-site residue.

The protein belongs to the transferase hexapeptide repeat family. LpxD subfamily. In terms of assembly, homotrimer.

The catalysed reaction is a UDP-3-O-[(3R)-3-hydroxyacyl]-alpha-D-glucosamine + a (3R)-hydroxyacyl-[ACP] = a UDP-2-N,3-O-bis[(3R)-3-hydroxyacyl]-alpha-D-glucosamine + holo-[ACP] + H(+). The protein operates within bacterial outer membrane biogenesis; LPS lipid A biosynthesis. In terms of biological role, catalyzes the N-acylation of UDP-3-O-acylglucosamine using 3-hydroxyacyl-ACP as the acyl donor. Is involved in the biosynthesis of lipid A, a phosphorylated glycolipid that anchors the lipopolysaccharide to the outer membrane of the cell. The polypeptide is UDP-3-O-acylglucosamine N-acyltransferase (Pseudoalteromonas atlantica (strain T6c / ATCC BAA-1087)).